The chain runs to 95 residues: Aspartyl/glutamyl-tRNA(Asn/Gln) amidotransferase subunit C (95 aa).

It belongs to the GatC family. As to quaternary structure, heterotrimer of A, B and C subunits.

The catalysed reaction is L-glutamyl-tRNA(Gln) + L-glutamine + ATP + H2O = L-glutaminyl-tRNA(Gln) + L-glutamate + ADP + phosphate + H(+). It carries out the reaction L-aspartyl-tRNA(Asn) + L-glutamine + ATP + H2O = L-asparaginyl-tRNA(Asn) + L-glutamate + ADP + phosphate + 2 H(+). In terms of biological role, allows the formation of correctly charged Asn-tRNA(Asn) or Gln-tRNA(Gln) through the transamidation of misacylated Asp-tRNA(Asn) or Glu-tRNA(Gln) in organisms which lack either or both of asparaginyl-tRNA or glutaminyl-tRNA synthetases. The reaction takes place in the presence of glutamine and ATP through an activated phospho-Asp-tRNA(Asn) or phospho-Glu-tRNA(Gln). This Thioalkalivibrio sulfidiphilus (strain HL-EbGR7) protein is Aspartyl/glutamyl-tRNA(Asn/Gln) amidotransferase subunit C.